The primary structure comprises 228 residues: Mediator of RNA polymerase II transcription subunit 7-A (228 aa).

It belongs to the Mediator complex subunit 7 family. As to quaternary structure, component of the Mediator complex.

The protein resides in the nucleus. Component of the Mediator complex, a coactivator involved in the regulated transcription of nearly all RNA polymerase II-dependent genes. Mediator functions as a bridge to convey information from gene-specific regulatory proteins to the basal RNA polymerase II transcription machinery. Mediator is recruited to promoters by direct interactions with regulatory proteins and serves as a scaffold for the assembly of a functional preinitiation complex with RNA polymerase II and the general transcription factors. This chain is Mediator of RNA polymerase II transcription subunit 7-A (med7-a), found in Xenopus laevis (African clawed frog).